A 480-amino-acid polypeptide reads, in one-letter code: MDINVLTIDATRIAIQERQATATAIAESFYKKIEAEDGEINAYLTLSRDRALAQAAKIDAIADRGDDLPRLAGLPVAIKDVISTKGVRTTAGSKILEEFIAPYDATVVQKLEAAGAVILGKTNCDEFAMGSSNENSAYGPVRNPRDKSRVPGGSSGGSAAVVAAGTAVTSLGSDTGGSIRQPASFCGVVGLMPTYGRVSRYGLIAFASSLDHIGPFAKDVKDAAIMLEVIAGRDPMDATSAEVAVPKYSDEIGKPVRGMKIGVAKEYFGEGLDPEVKASVEASIQNLAKAGAEIIEVSLPHTKYAIPTYYLVATAEASSNLARFDGVRYSHRSKEAKTLSEMYRKSRDEGFGAEVKRRIILGTYALSAGYYDAYYLKAQKVRTLLAQDFDEAFAKVDAIVTPTTPTPAFKLGEKADDPLAMYLADIFTVTADLVGIPGISVPCGSSKDGLPIGLQVFAKHFQEATMIRVAHAVEHALAAV.

Residues K79 and S154 each act as charge relay system in the active site. Positions 133 to 156 (NENSAYGPVRNPRDKSRVPGGSSG) are disordered. S178 (acyl-ester intermediate) is an active-site residue.

Belongs to the amidase family. GatA subfamily. Heterotrimer of A, B and C subunits.

The enzyme catalyses L-glutamyl-tRNA(Gln) + L-glutamine + ATP + H2O = L-glutaminyl-tRNA(Gln) + L-glutamate + ADP + phosphate + H(+). In terms of biological role, allows the formation of correctly charged Gln-tRNA(Gln) through the transamidation of misacylated Glu-tRNA(Gln) in organisms which lack glutaminyl-tRNA synthetase. The reaction takes place in the presence of glutamine and ATP through an activated gamma-phospho-Glu-tRNA(Gln). The protein is Glutamyl-tRNA(Gln) amidotransferase subunit A of Koribacter versatilis (strain Ellin345).